A 186-amino-acid chain; its full sequence is Large ribosomal subunit protein eL15 (186 aa).

The segment at 163 to 186 (RGLTSAGKKGRGLNKKGKGAEKVR) is disordered. The span at 170–179 (KKGRGLNKKG) shows a compositional bias: basic residues.

This sequence belongs to the eukaryotic ribosomal protein eL15 family.

This Methanosphaera stadtmanae (strain ATCC 43021 / DSM 3091 / JCM 11832 / MCB-3) protein is Large ribosomal subunit protein eL15.